The sequence spans 682 residues: Penicillin-binding protein activator LpoA (682 aa).

Residues 1–26 (MLPLNSVRTHAGRLVPVMLAALFLAG) form the signal peptide. A lipid anchor (N-palmitoyl cysteine) is attached at C27. C27 carries the S-diacylglycerol cysteine lipid modification. Disordered regions lie at residues 240–262 (AKQLPSQLGGTPPAAAAPTTGET) and 314–341 (ANNAAAATPGAPAVPSPASSTPSAVSPT). The segment covering 248-262 (GGTPPAAAAPTTGET) has biased composition (low complexity).

Belongs to the LpoA family. In terms of assembly, interacts with PBP1a.

The protein resides in the cell outer membrane. Its function is as follows. Regulator of peptidoglycan synthesis that is essential for the function of penicillin-binding protein 1A (PBP1a). The polypeptide is Penicillin-binding protein activator LpoA (Dickeya chrysanthemi (strain Ech1591) (Dickeya zeae (strain Ech1591))).